The chain runs to 373 residues: L-threonine 3-dehydrogenase, mitochondrial (373 aa).

NAD(+)-binding positions include 62-67 (GGLGQL), 88-90 (DIR), 106-107 (NI), Tyr195, Lys199, and Ile225. Residue Tyr195 is the Proton donor/acceptor of the active site.

The protein belongs to the NAD(P)-dependent epimerase/dehydratase family. In terms of assembly, homodimer.

The protein localises to the mitochondrion. It carries out the reaction L-threonine + NAD(+) = (2S)-2-amino-3-oxobutanoate + NADH + H(+). It functions in the pathway amino-acid degradation; L-threonine degradation via oxydo-reductase pathway; glycine from L-threonine: step 1/2. Catalyzes the NAD(+)-dependent oxidation of L-threonine to 2-amino-3-ketobutyrate, mediating L-threonine catabolism. This is L-threonine 3-dehydrogenase, mitochondrial from Mus musculus (Mouse).